The chain runs to 324 residues: MGPWGEPELLVWRPEAVASEPPVPVGLEVKLGALVLLLVLTLLCSLVPICVLRRPGANHEGSASRQKALSLVSCFAGGVFLATCLLDLLPDYLAAIDEALAALHVTLQFPLQEFILAMGFFLVLVMEQITLAYKEQSGPSPLEETRALLGTVNGGPQHWHDGPGVPQASGAPATPSALRACVLVFSLALHSVFEGLAVGLQRDRARAMELCLALLLHKGILAVSLSLRLLQSHLRAQVVAGCGILFSCMTPLGIGLGAALAESAGPLHQLAQSVLEGMAAGTFLYITFLEILPQELASSEQRILKVILLLAGFALLTGLLFIQI.

Topologically, residues 1–30 are extracellular; it reads MGPWGEPELLVWRPEAVASEPPVPVGLEVK. The helical transmembrane segment at 31-51 threads the bilayer; the sequence is LGALVLLLVLTLLCSLVPICV. Over 52 to 68 the chain is Cytoplasmic; that stretch reads LRRPGANHEGSASRQKA. The chain crosses the membrane as a helical span at residues 69–89; sequence LSLVSCFAGGVFLATCLLDLL. The Extracellular portion of the chain corresponds to 90–104; the sequence is PDYLAAIDEALAALH. A helical transmembrane segment spans residues 105 to 125; sequence VTLQFPLQEFILAMGFFLVLV. At 126–179 the chain is on the cytoplasmic side; it reads MEQITLAYKEQSGPSPLEETRALLGTVNGGPQHWHDGPGVPQASGAPATPSALR. The helical transmembrane segment at 180 to 200 threads the bilayer; that stretch reads ACVLVFSLALHSVFEGLAVGL. The Extracellular portion of the chain corresponds to 201–206; that stretch reads QRDRAR. A helical membrane pass occupies residues 207–227; it reads AMELCLALLLHKGILAVSLSL. Residues 228–237 lie on the Cytoplasmic side of the membrane; it reads RLLQSHLRAQ. The chain crosses the membrane as a helical span at residues 238-258; the sequence is VVAGCGILFSCMTPLGIGLGA. Residues 259 to 272 lie on the Extracellular side of the membrane; sequence ALAESAGPLHQLAQ. Residues 273–293 form a helical membrane-spanning segment; it reads SVLEGMAAGTFLYITFLEILP. At 294–303 the chain is on the cytoplasmic side; the sequence is QELASSEQRI. The helical transmembrane segment at 304–324 threads the bilayer; the sequence is LKVILLLAGFALLTGLLFIQI.

This sequence belongs to the ZIP transporter (TC 2.A.5) family. In terms of tissue distribution, ubiquitous. Expressed in most adult and fetal tissues including the epidermis.

The protein resides in the cell membrane. Its subcellular location is the endoplasmic reticulum membrane. The catalysed reaction is Zn(2+)(in) = Zn(2+)(out). Its activity is regulated as follows. Inhibited by Ni(2+) ions. Fe(2+) ions do not inhibit zinc uptake. Functionally, transporter for the divalent cation Zn(2+). Mediates the influx of Zn(2+) into cells from extracellular space. Functions as the major importer of zinc from circulating blood plasma into prostate cells. The polypeptide is Zinc transporter ZIP1 (Homo sapiens (Human)).